The chain runs to 314 residues: MGKIYSFVLVAIALMMGREGWALESESCLREQVRLRAQVHQLETRVKQQQTMIAQLLHEKEVQFLDKGSENSFIDLGGKRQYADCSEIYNDGFKQSGFYKIKPLQSLAEFSVYCDMSDGGGWTVIQRRSDGSENFNRGWNDYENGFGNFVQNNGEYWLGNKNINLLTIQGDYTLKIDLTDFEKNSSFAQYQSFKVGDKKSFYELNIGEYSGTAGDSLSGTFHPEVQWWASHQRMKFSTWDRDNDNYQGNCAEEEQSGWWFNRCHSANLNGVYYRGSYRAETDNGVVWYTWHGWWYSLKSVVMKIRPSDFIPNII.

Residues 1-22 (MGKIYSFVLVAIALMMGREGWA) form the signal peptide. Residues 28–62 (CLREQVRLRAQVHQLETRVKQQQTMIAQLLHEKEV) adopt a coiled-coil conformation. One can recognise a Fibrinogen C-terminal domain in the interval 76 to 308 (LGGKRQYADC…SVVMKIRPSD (233 aa)). 2 disulfides stabilise this stretch: Cys-85–Cys-114 and Cys-250–Cys-263.

Homodimer. Interacts (via the Fibrinogen C-terminal domain) with LAG3 (via Ig-like domains 1 and 2). As to expression, mainly expressed in liver. Also expressed in brown adipose tissue.

It is found in the secreted. Functionally, immune suppressive molecule that inhibits antigen-specific T-cell activation by acting as a major ligand of LAG3. Responsible for LAG3 T-cell inhibitory function. Binds LAG3 independently from MHC class II (MHC-II). Secreted by, and promotes growth of, hepatocytes. This Mus musculus (Mouse) protein is Fibrinogen-like protein 1 (Fgl1).